The following is a 226-amino-acid chain: Uracil-DNA glycosylase (226 aa).

Asp-64 serves as the catalytic Proton acceptor.

Belongs to the uracil-DNA glycosylase (UDG) superfamily. UNG family.

The protein resides in the cytoplasm. The catalysed reaction is Hydrolyzes single-stranded DNA or mismatched double-stranded DNA and polynucleotides, releasing free uracil.. In terms of biological role, excises uracil residues from the DNA which can arise as a result of misincorporation of dUMP residues by DNA polymerase or due to deamination of cytosine. This chain is Uracil-DNA glycosylase, found in Vibrio cholerae serotype O1 (strain ATCC 39541 / Classical Ogawa 395 / O395).